A 219-amino-acid chain; its full sequence is uncharacterized protein (219 aa).

Residues 30 to 107 (FRLFVGNLGN…RPVKLSRATS (78 aa)) form the RRM domain. Residues 140–149 (KKIKNKHGKN) are compositionally biased toward basic residues. The segment at 140 to 219 (KKIKNKHGKN…YSRASSFRRV (80 aa)) is disordered. Residues 150-169 (SSKSSRAAQSAAAELISSSS) are compositionally biased toward low complexity. Residues 176 to 186 (ANSTSVPNAVN) are compositionally biased toward polar residues.

This is an uncharacterized protein from Schizosaccharomyces pombe (strain 972 / ATCC 24843) (Fission yeast).